The primary structure comprises 199 residues: MAELVSVAILGYLLGSIPVGFLMGKLRGIDVRRYGSGATGGTNVLRTLGPWAALFTVLCDIGKGLLAAYLGERLAGEWGFVAAGLLASLGHSYPVWLRFRGGKSVATSGGVMLLHYPLAVLVGIAAGALAVVPTRWVSLGSLTASLAVVLQLFLLDAPLSHRLLVVALAVVIYVRHWENMKRIAAGTENRLGVKARPRA.

5 helical membrane-spanning segments follow: residues 4–24 (LVSV…FLMG), 51–71 (WAAL…AYLG), 77–97 (EWGF…PVWL), 111–131 (VMLL…ALAV), and 152–172 (LFLL…AVVI).

The protein belongs to the PlsY family. In terms of assembly, probably interacts with PlsX.

The protein localises to the cell membrane. The enzyme catalyses an acyl phosphate + sn-glycerol 3-phosphate = a 1-acyl-sn-glycero-3-phosphate + phosphate. It functions in the pathway lipid metabolism; phospholipid metabolism. Catalyzes the transfer of an acyl group from acyl-phosphate (acyl-PO(4)) to glycerol-3-phosphate (G3P) to form lysophosphatidic acid (LPA). This enzyme utilizes acyl-phosphate as fatty acyl donor, but not acyl-CoA or acyl-ACP. The protein is Glycerol-3-phosphate acyltransferase of Symbiobacterium thermophilum (strain DSM 24528 / JCM 14929 / IAM 14863 / T).